A 335-amino-acid chain; its full sequence is Phospho-N-acetylmuramoyl-pentapeptide-transferase (335 aa).

The next 10 helical transmembrane spans lie at 5–25 (IFLAAALALMITLILGPLMIP), 50–70 (TPTMGGIIFLVGIVVSALIMA), 78–98 (MVMVISAMLGYGLIGFIDDFI), 114–133 (LIGQIALALLLTWGANRYLG), 145–165 (IHLELGLFYYPFVSFIIVGIT), 177–197 (LAAGTTLFSMLSYVSIATLAA), 200–220 (GGGVAILAYESDLAVFAAAAV), 236–256 (VFMGDTGSLALGGALVGLAVL), 262–282 (ILLIIGGVYVVEAISVILQVF), and 311–331 (VVMVFWLASLLCGVLGVIAYM).

This sequence belongs to the glycosyltransferase 4 family. MraY subfamily. It depends on Mg(2+) as a cofactor.

Its subcellular location is the cell membrane. The enzyme catalyses UDP-N-acetyl-alpha-D-muramoyl-L-alanyl-gamma-D-glutamyl-meso-2,6-diaminopimeloyl-D-alanyl-D-alanine + di-trans,octa-cis-undecaprenyl phosphate = di-trans,octa-cis-undecaprenyl diphospho-N-acetyl-alpha-D-muramoyl-L-alanyl-D-glutamyl-meso-2,6-diaminopimeloyl-D-alanyl-D-alanine + UMP. It participates in cell wall biogenesis; peptidoglycan biosynthesis. Its function is as follows. Catalyzes the initial step of the lipid cycle reactions in the biosynthesis of the cell wall peptidoglycan: transfers peptidoglycan precursor phospho-MurNAc-pentapeptide from UDP-MurNAc-pentapeptide onto the lipid carrier undecaprenyl phosphate, yielding undecaprenyl-pyrophosphoryl-MurNAc-pentapeptide, known as lipid I. This Desulfitobacterium hafniense (strain DSM 10664 / DCB-2) protein is Phospho-N-acetylmuramoyl-pentapeptide-transferase.